We begin with the raw amino-acid sequence, 136 residues long: Histone H3, embryonic (136 aa).

Residues 1-43 form a disordered region; that stretch reads MARTKQTARKSTGGKAPRKQLATKAARKSAPATGGVKKPHRYR. Lysine 5 carries the N6-methylated lysine modification. Lysine 10 carries the post-translational modification N6-acetyllysine; alternate. At lysine 10 the chain carries N6-methylated lysine; alternate. Serine 11 bears the Phosphoserine mark. Residues lysine 15 and lysine 24 each carry the N6-acetyllysine modification. 3 positions are modified to N6-methylated lysine: lysine 28, lysine 37, and lysine 80.

This sequence belongs to the histone H3 family. In terms of assembly, the nucleosome is a histone octamer containing two molecules each of H2A, H2B, H3 and H4 assembled in one H3-H4 heterotetramer and two H2A-H2B heterodimers. The octamer wraps approximately 147 bp of DNA. In terms of processing, acetylation is generally linked to gene activation. Methylation at Lys-5 is linked to gene activation. Methylation at Lys-10 is linked to gene repression.

Its subcellular location is the nucleus. It localises to the chromosome. In terms of biological role, core component of nucleosome. Nucleosomes wrap and compact DNA into chromatin, limiting DNA accessibility to the cellular machineries which require DNA as a template. Histones thereby play a central role in transcription regulation, DNA repair, DNA replication and chromosomal stability. DNA accessibility is regulated via a complex set of post-translational modifications of histones, also called histone code, and nucleosome remodeling. This is Histone H3, embryonic from Strongylocentrotus purpuratus (Purple sea urchin).